A 571-amino-acid polypeptide reads, in one-letter code: Fumarate reductase (cytochrome) (571 aa).

His8, Cys14, Cys17, His18, Cys36, Cys39, His40, His52, His58, His61, Cys68, Cys71, His72, Ala74, His75, Cys82, Cys85, His86, Asn91, and Tyr94 together coordinate heme c. A flavoprotein-like region spans residues 118-571 (ALASAPHDTV…EEAAKYSKKN (454 aa)). The FAD site is built by Ala137, Glu156, Asn164, Ala165, Ala169, Gly170, Gly171, Gly278, and Gln338. Succinate is bound at residue Gly170. Succinate contacts are provided by His365, Thr377, and Glu378. The fumarate site is built by Thr377, Glu378, and Arg402. Arg402 acts as the Proton donor in catalysis. Lys431 provides a ligand contact to heme c. Residue His504 participates in succinate binding. His504 is a fumarate binding site. FAD is bound by residues His505 and Glu534. Succinate-binding residues include Arg544 and Gly547. Fumarate contacts are provided by Arg544 and Gly547. FAD contacts are provided by Ala549 and Ile550.

Monomer. It depends on FAD as a cofactor. Heme c serves as cofactor.

The protein resides in the periplasm. The enzyme catalyses 2 Fe(III)-[cytochrome c] + succinate = fumarate + 2 Fe(II)-[cytochrome c] + 2 H(+). Flavocytochrome that catalyzes the reduction of fumarate to succinate. Is essential for fumarate respiration during anaerobic growth, acting as the terminal reductase. Receives electrons from the membrane-bound tetraheme c-type cytochrome CymA. In vitro, can use the artificial electron donor methyl viologen. In Shewanella frigidimarina, this protein is Fumarate reductase (cytochrome) (fccA).